The primary structure comprises 309 residues: 2-dehydro-3-deoxygluconokinase (309 aa).

Residues 34–38 (GAEVN), Tyr-89, 103–105 (YYR), and Arg-167 contribute to the substrate site. Residues 165 to 167 (NYR), Ser-193, 219 to 225 (KRGAKGA), 248 to 251 (GAGD), and Asn-275 each bind ATP. Asp-251 is a binding site for substrate. Asp-251 functions as the Proton acceptor in the catalytic mechanism. A substrate-binding site is contributed by Asp-287.

This sequence belongs to the carbohydrate kinase pfkB family. Homohexamer; trimer of dimers.

It catalyses the reaction 2-dehydro-3-deoxy-D-gluconate + ATP = 2-dehydro-3-deoxy-6-phospho-D-gluconate + ADP + H(+). It functions in the pathway carbohydrate acid metabolism; 2-dehydro-3-deoxy-D-gluconate degradation; D-glyceraldehyde 3-phosphate and pyruvate from 2-dehydro-3-deoxy-D-gluconate: step 1/2. In terms of biological role, involved in the degradation of glucose via the semi-phosphorylative Entner-Doudoroff pathway. Catalyzes the phosphorylation of 2-keto-3-deoxygluconate (KDG) to produce 2-keto-3-deoxy-6-phosphogluconate (KDPG). The chain is 2-dehydro-3-deoxygluconokinase (kdgK) from Thermus thermophilus (strain ATCC 27634 / DSM 579 / HB8).